The primary structure comprises 292 residues: Tyrosine isonitrile desaturase (292 aa).

Residues His-110, Asp-112, and His-259 each coordinate Fe cation.

It belongs to the TfdA dioxygenase family. The cofactor is Fe(2+).

It catalyses the reaction (2S)-3-(4-hydroxyphenyl)-2-isocyanopropanoate + 2-oxoglutarate + O2 = (2E)-3-(4-hydroxyphenyl)-2-isocyanoprop-2-enoate + succinate + CO2 + H2O. In terms of biological role, catalyzes the 2-oxoglutarate-dependent oxidation of tyrosine isonitrile. The chain is Tyrosine isonitrile desaturase from Erwinia amylovora (strain CFBP1430).